The following is a 35-amino-acid chain: Photosystem II reaction center protein T (35 aa).

Residues 3-23 traverse the membrane as a helical segment; that stretch reads ALVYTFLLVSTLGIIFFAIFF.

It belongs to the PsbT family. PSII is composed of 1 copy each of membrane proteins PsbA, PsbB, PsbC, PsbD, PsbE, PsbF, PsbH, PsbI, PsbJ, PsbK, PsbL, PsbM, PsbT, PsbY, PsbZ, Psb30/Ycf12, at least 3 peripheral proteins of the oxygen-evolving complex and a large number of cofactors. It forms dimeric complexes.

The protein localises to the plastid. It is found in the chloroplast thylakoid membrane. In terms of biological role, found at the monomer-monomer interface of the photosystem II (PS II) dimer, plays a role in assembly and dimerization of PSII. PSII is a light-driven water plastoquinone oxidoreductase, using light energy to abstract electrons from H(2)O, generating a proton gradient subsequently used for ATP formation. The polypeptide is Photosystem II reaction center protein T (Oenothera argillicola (Appalachian evening primrose)).